The chain runs to 222 residues: GTP cyclohydrolase 1 (222 aa).

Zn(2+)-binding residues include C111, H114, and C182.

The protein belongs to the GTP cyclohydrolase I family. In terms of assembly, toroid-shaped homodecamer, composed of two pentamers of five dimers.

It carries out the reaction GTP + H2O = 7,8-dihydroneopterin 3'-triphosphate + formate + H(+). It functions in the pathway cofactor biosynthesis; 7,8-dihydroneopterin triphosphate biosynthesis; 7,8-dihydroneopterin triphosphate from GTP: step 1/1. The chain is GTP cyclohydrolase 1 from Salmonella choleraesuis (strain SC-B67).